The chain runs to 592 residues: Bifunctional enzyme BirA/CoaX (592 aa).

A biotin--protein ligase region spans residues 1-329 (MTVLKPSHWR…ISLRPDNRSV (329 aa)). The region spanning 83 to 259 (QTALKHECAS…ELGAVLEQYA (177 aa)) is the BPL/LPL catalytic domain. Positions 336–592 (DSERFLLLEG…AAEGGESEHA (257 aa)) are type III pantothenate kinase. 344 to 351 (EGGNSRLK) serves as a coordination point for ATP. Residues Tyr-426 and 433-436 (GSDR) each bind substrate. Asp-435 (proton acceptor) is an active-site residue. Thr-458 is an ATP binding site. Thr-508 contributes to the substrate binding site.

It in the N-terminal section; belongs to the biotin--protein ligase family. In the C-terminal section; belongs to the type III pantothenate kinase family. It depends on NH4(+) as a cofactor. The cofactor is K(+).

Its subcellular location is the cytoplasm. The enzyme catalyses biotin + L-lysyl-[protein] + ATP = N(6)-biotinyl-L-lysyl-[protein] + AMP + diphosphate + H(+). It catalyses the reaction (R)-pantothenate + ATP = (R)-4'-phosphopantothenate + ADP + H(+). It participates in cofactor biosynthesis; coenzyme A biosynthesis; CoA from (R)-pantothenate: step 1/5. Activates biotin to form biotinyl-5'-adenylate and transfers the biotin moiety to biotin-accepting proteins. Functionally, catalyzes the phosphorylation of pantothenate (Pan), the first step in CoA biosynthesis. This is Bifunctional enzyme BirA/CoaX (birA/coaX) from Neisseria gonorrhoeae (strain ATCC 700825 / FA 1090).